The following is a 71-amino-acid chain: Putative antitoxin VapB14 (71 aa).

Functionally, putative antitoxin component of a possible type II toxin-antitoxin (TA) system. The cognate toxin is VapB14. This is Putative antitoxin VapB14 (vapB14) from Mycobacterium tuberculosis (strain ATCC 25618 / H37Rv).